Here is a 109-residue protein sequence, read N- to C-terminus: Iron-sulfur cluster assembly protein CyaY (109 aa).

Belongs to the frataxin family.

Functionally, involved in iron-sulfur (Fe-S) cluster assembly. May act as a regulator of Fe-S biogenesis. In Albidiferax ferrireducens (strain ATCC BAA-621 / DSM 15236 / T118) (Rhodoferax ferrireducens), this protein is Iron-sulfur cluster assembly protein CyaY.